Reading from the N-terminus, the 336-residue chain is N-((2S)-2-amino-2-carboxyethyl)-L-glutamate dehydrogenase (336 aa).

Lys78 serves as the catalytic Proton donor/acceptor. Residues Arg122 and Lys242 each contribute to the NAD(+) site.

It belongs to the ornithine cyclodeaminase/mu-crystallin family. In terms of assembly, homodimer.

It carries out the reaction N-[(2S)-2-amino-2-carboxyethyl]-L-glutamate + NAD(+) + H2O = (S)-2,3-diaminopropanoate + 2-oxoglutarate + NADH + H(+). Its pathway is siderophore biosynthesis. Catalyzes the hydrolysis of N-((2S)-2-amino-2-carboxyethyl)-L-glutamate (ACEGA) to form L-2,3-diaminopropionic acid and 2-oxoglutarate. Involved in the biosynthesis of L-2,3-diaminopropionic acid (L-Dap), a precursor of staphyloferrin B and antibiotics. In Staphylococcus aureus (strain NCTC 8325 / PS 47), this protein is N-((2S)-2-amino-2-carboxyethyl)-L-glutamate dehydrogenase.